The chain runs to 1229 residues: MSLPERPGAKASYEQRNSYRKSPSRRNRPNDIEASGYYPVTGGQHQRGPSVNSFAETIRSPNSNIESAPLSPSAEQIEHGSDQPFQRKRSLIRPERNRIDRDHPNYHYRKHAAKMNTLPSSTGNDPVLEDVSGATESGPPSGSNSASGSGVREENIPRKSRKASGRETVAEKSDNTRRRVSTRNSKIVKEGKRKEKIPEQLRPPSAWNVYCAVITFWSPDFIMKCCGMPAKAQRRAWREKIGLISLILIIMGVVGFLTFGFNQAVCGGPVLRLHINSVDRSYMIFHGTAYNLDGSHHPVAEGIPKRLDGTGANVVYDLPEGYGGTDGSFMFQNVNGKCKGLITKAPNSDVPSEGDNLAWYFPCHARNQDGSSQPNMTYPYYFGYACHTTPLARSTFYTQLDKSADVYFTWADIRNNSRNLFVYSGNVLDLDLLFWFNRDQVNIPRRFEELRDKNNAANRAIRGRDATRTFMASGDRQIAECFEDIIKVGTVDTDTVGCIAAKVVLYVSLALILSVVGARFTLALIFQWFISKNYAADKTSQTSDKRKRNKQIEDWSEDIYRAPPRMPGDVGSSVAGASSSDHTSKRSSFLPTTSRFSTVYGAERSARNKSMPTTMASQASGGYMGPSSTAYRETNESRTSFLKSDPYATNTAPIEGPGPSGFIHDSVVPQPPSDWMPFGFPLAHTICLVTAYSEGELGLRTTLDSVAMTDYPNSHKVILVICDGIIKGKGESKSTPEYVLDMMKDHTIPVEDVEAFSYVAVASGSKRHNMAKIYAGFYDYGTQSNIPLDKQQRVPMMVVVKCGTPDEMVKSKPGNRGKRDSQIILMSFLQKVMFDERMTELEYEMFNGLWKVTGISPDFYEIVLMVDADTKVFPDSLTHMISAMVKDPEIMGLCGETKIANKRDSWVSAIQVFEYFISHHLAKSFESVFGGVTCLPGCFCMYRIKAPKGAQNYWVPILANPDVVEHYSENVVDTLHKKNLLLLGEDRYLTTLMLRTFPKRKQVFVPQAVCKTTVPDSFMVLLSQRRRWINSTIHNLMELVLVRDLCGTFCFSMQFVIFIELIGTLVLPAAIAFTFYVVIISIINQPPQIIPLVLLGLILGLPAILIIITAHSWSYVLWMLIYLLSLPVWNFVLPAYAFWKFDDFSWGDTRKTAGEKTKKAGIEYEGEFDSSKITMKRWAEFERDRRARQSQYWGSRENVTGGVRTASGVWASAPPHHHQQQYDEYYSDA.

The tract at residues 1–196 (MSLPERPGAK…IVKEGKRKEK (196 aa)) is disordered. Residues 1-202 (MSLPERPGAK…RKEKIPEQLR (202 aa)) lie on the Cytoplasmic side of the membrane. Residues 18-27 (SYRKSPSRRN) are compositionally biased toward basic residues. Over residues 43–66 (GQHQRGPSVNSFAETIRSPNSNIE) the composition is skewed to polar residues. The segment covering 92–105 (IRPERNRIDRDHPN) has biased composition (basic and acidic residues). Residues 137–150 (SGPPSGSNSASGSG) show a composition bias toward low complexity. Basic and acidic residues-rich tracts occupy residues 164–177 (SGRE…DNTR) and 187–196 (IVKEGKRKEK). The chain crosses the membrane as a helical span at residues 203-223 (PPSAWNVYCAVITFWSPDFIM). Residues 224–240 (KCCGMPAKAQRRAWREK) are Extracellular-facing. Residues 241–261 (IGLISLILIIMGVVGFLTFGF) traverse the membrane as a helical segment. Topologically, residues 262 to 495 (NQAVCGGPVL…IKVGTVDTDT (234 aa)) are cytoplasmic. A helical membrane pass occupies residues 496 to 516 (VGCIAAKVVLYVSLALILSVV). Over 517–1054 (GARFTLALIF…LCGTFCFSMQ (538 aa)) the chain is Extracellular. Disordered stretches follow at residues 539-589 (TSQT…RSSF) and 601-648 (GAER…DPYA). Low complexity predominate over residues 568-581 (GDVGSSVAGASSSD). Asn-608, Asn-635, and Asn-1030 each carry an N-linked (GlcNAc...) asparagine glycan. Residues 608 to 648 (NKSMPTTMASQASGGYMGPSSTAYRETNESRTSFLKSDPYA) show a composition bias toward polar residues. A helical membrane pass occupies residues 1055 to 1075 (FVIFIELIGTLVLPAAIAFTF). Topologically, residues 1076-1088 (YVVIISIINQPPQ) are cytoplasmic. A helical transmembrane segment spans residues 1089–1109 (IIPLVLLGLILGLPAILIIIT). The Extracellular segment spans residues 1110-1114 (AHSWS). The helical transmembrane segment at 1115–1135 (YVLWMLIYLLSLPVWNFVLPA) threads the bilayer. Residues 1136–1229 (YAFWKFDDFS…QQYDEYYSDA (94 aa)) lie on the Cytoplasmic side of the membrane. The interval 1210 to 1229 (WASAPPHHHQQQYDEYYSDA) is disordered.

Belongs to the chitin synthase family. Class IV subfamily.

It localises to the cell membrane. It catalyses the reaction [(1-&gt;4)-N-acetyl-beta-D-glucosaminyl](n) + UDP-N-acetyl-alpha-D-glucosamine = [(1-&gt;4)-N-acetyl-beta-D-glucosaminyl](n+1) + UDP + H(+). In terms of biological role, polymerizes chitin, a structural polymer of the cell wall and septum, by transferring the sugar moiety of UDP-GlcNAc to the non-reducing end of the growing chitin polymer. Might function as a negative regulator on expression of other CHS genes. The chain is Chitin synthase 4 from Pyricularia oryzae (strain 70-15 / ATCC MYA-4617 / FGSC 8958) (Rice blast fungus).